Consider the following 398-residue polypeptide: 8-amino-7-oxononanoate synthase (398 aa).

Arg23 serves as a coordination point for substrate. 110–111 contributes to the pyridoxal 5'-phosphate binding site; the sequence is GY. His135 contacts substrate. Residues Ser181, His209, and Thr237 each contribute to the pyridoxal 5'-phosphate site. Lys240 bears the N6-(pyridoxal phosphate)lysine mark. A substrate-binding site is contributed by Thr354.

Belongs to the class-II pyridoxal-phosphate-dependent aminotransferase family. BioF subfamily. In terms of assembly, homodimer. Pyridoxal 5'-phosphate is required as a cofactor.

It catalyses the reaction 6-carboxyhexanoyl-[ACP] + L-alanine + H(+) = (8S)-8-amino-7-oxononanoate + holo-[ACP] + CO2. It participates in cofactor biosynthesis; biotin biosynthesis. Functionally, catalyzes the decarboxylative condensation of pimeloyl-[acyl-carrier protein] and L-alanine to produce 8-amino-7-oxononanoate (AON), [acyl-carrier protein], and carbon dioxide. The sequence is that of 8-amino-7-oxononanoate synthase from Anaeromyxobacter sp. (strain K).